Reading from the N-terminus, the 204-residue chain is Guanine-specific ADP-ribosyl transferase (204 aa).

Residues 1 to 42 form the signal peptide; it reads MITTSLRRRTAAAVLSLSAVLATTAATAPGAAPAPSAAPAKA. Cysteines 46 and 76 form a disulfide. Residues 81 to 85 and lysine 98 contribute to the NADH site; that span reads RSDSR. Residues 111–114, 132–134, tryptophan 159, and glutamine 162 contribute to the GDP site; these read VLVN and WYK. The PN (phosphate-nicotinamide) loop signature appears at 132 to 136; it reads WYKSG. Residues cysteine 180 and cysteine 194 are joined by a disulfide bond.

The protein belongs to the pierisin ADP-ribosyltransferase family. Monomer.

Its subcellular location is the secreted. The enzyme catalyses guanosine + NAD(+) = N(2)-(ADP-D-ribosyl)-guanosine + nicotinamide + H(+). It carries out the reaction a 2'-deoxyguanosine in DNA + NAD(+) = an N(2)-(ADP-L-ribosyl)-2'-deoxyguanosine in DNA + nicotinamide + H(+). The catalysed reaction is 2'-deoxyguanosine + NAD(+) = N(2)-(ADP-D-ribosyl)-2'-deoxyguanosine + nicotinamide + H(+). It catalyses the reaction GMP + NAD(+) = N(2)-(ADP-D-ribosyl)-GMP + nicotinamide + H(+). The enzyme catalyses GTP + NAD(+) = N(2)-(ADP-D-ribosyl)-GTP + nicotinamide + H(+). It carries out the reaction dGMP + NAD(+) = N(2)-(ADP-D-ribosyl)-dGMP + nicotinamide + H(+). The catalysed reaction is dGTP + NAD(+) = N(2)-(ADP-D-ribosyl)-dGTP + nicotinamide + H(+). It catalyses the reaction 3',5'-cyclic GMP + NAD(+) = N(2)-(ADP-D-ribosyl)-3',5'-cyclic GMP + nicotinamide + H(+). The enzyme catalyses guanine + NAD(+) = N(2)-(ADP-D-ribosyl)-guanine + nicotinamide + H(+). It carries out the reaction GDP + NAD(+) = N(2)-(ADP-D-ribosyl)-GDP + nicotinamide + H(+). Its activity is regulated as follows. Inhibited by NADH. In terms of biological role, ADP-ribosylates the N2 amino group of guanosine, deoxyguanosine, GMP, dGMP, cGMP, GTP and dGTP; oligo-guanosine, oligo-deoxyguanosine and tRNA are ADP-ribosylated less efficiently, while dsDNA is a very poor substrate. Also acts on GDP. This is Guanine-specific ADP-ribosyl transferase from Streptomyces coelicolor (strain ATCC BAA-471 / A3(2) / M145).